The sequence spans 119 residues: Large ribosomal subunit protein uL22 (119 aa).

It belongs to the universal ribosomal protein uL22 family. In terms of assembly, part of the 50S ribosomal subunit.

Its function is as follows. This protein binds specifically to 23S rRNA; its binding is stimulated by other ribosomal proteins, e.g. L4, L17, and L20. It is important during the early stages of 50S assembly. It makes multiple contacts with different domains of the 23S rRNA in the assembled 50S subunit and ribosome. Functionally, the globular domain of the protein is located near the polypeptide exit tunnel on the outside of the subunit, while an extended beta-hairpin is found that lines the wall of the exit tunnel in the center of the 70S ribosome. The polypeptide is Large ribosomal subunit protein uL22 (Bifidobacterium longum (strain DJO10A)).